We begin with the raw amino-acid sequence, 474 residues long: MSVARTGKVVQVVGPVVDVRFEGELPNILNALHMVRNGERLVLEVATHMGEGTVRAIAMDSTDGVVRGMEVTDTGDTIRVPVGRQTLGRILNVVGEPQDEKGPVETTETLPIHRPAPAFAQQATSAEILETGIKVIDLLAPYAKGGKVGLFGGAGVGKTVLIMELINNVAQEHGGYSVFAGVGERTREGNDLYHEMAESGVIDPNSWENSKAALIYGQMNEPPGARARVALTGLTVAEYFRDLGGQDVLFFVDNIFRFTQAGAEVSALLGRIPSAVGYQPTLGTDMGALQERITTTKTGSITSVQAVYVPADDLTDPAPATTFSHLDATTVLNRAISEMGIYPAVDPLDSTSRVLDPKVVGEEHYHTAREVQRILQTYKSLQDIIAILGMDELSEEDKLVVNRARKIQRFLSQPFHVAEVFTGTKGVYVPVKKTVQGFKELCEGKYDNVPEAAFYMVSDIDAALAKAEKLKAAS.

ATP is bound at residue 152 to 159; that stretch reads GGAGVGKT.

This sequence belongs to the ATPase alpha/beta chains family. As to quaternary structure, F-type ATPases have 2 components, CF(1) - the catalytic core - and CF(0) - the membrane proton channel. CF(1) has five subunits: alpha(3), beta(3), gamma(1), delta(1), epsilon(1). CF(0) has three main subunits: a(1), b(2) and c(9-12). The alpha and beta chains form an alternating ring which encloses part of the gamma chain. CF(1) is attached to CF(0) by a central stalk formed by the gamma and epsilon chains, while a peripheral stalk is formed by the delta and b chains.

The protein resides in the cell inner membrane. It catalyses the reaction ATP + H2O + 4 H(+)(in) = ADP + phosphate + 5 H(+)(out). Produces ATP from ADP in the presence of a proton gradient across the membrane. The catalytic sites are hosted primarily by the beta subunits. The protein is ATP synthase subunit beta of Magnetococcus marinus (strain ATCC BAA-1437 / JCM 17883 / MC-1).